Consider the following 90-residue polypeptide: MSSGGLLLLLGLLTLWAELTPVSGKKRPDFCYLPADTGPCMANFPRFYYDSASKKCKKFTYGGCHGNANNFETREECRKKCFASAARRPT.

An N-terminal signal peptide occupies residues 1 to 24; that stretch reads MSSGGLLLLLGLLTLWAELTPVSG. Residues 31–81 enclose the BPTI/Kunitz inhibitor domain; the sequence is CYLPADTGPCMANFPRFYYDSASKKCKKFTYGGCHGNANNFETREECRKKC. 3 disulfides stabilise this stretch: Cys-31–Cys-81, Cys-40–Cys-64, and Cys-56–Cys-77.

The protein belongs to the venom Kunitz-type family. As to expression, expressed by the venom gland.

It localises to the secreted. Serine protease inhibitor. This is Kunitz-type serine protease inhibitor bitisilin-2 from Bitis gabonica (Gaboon adder).